The sequence spans 296 residues: tRNA dimethylallyltransferase (296 aa).

An ATP-binding site is contributed by G2–T9. T4–T9 contributes to the substrate binding site. 3 interaction with substrate tRNA regions span residues D27–L30, Q151–R155, and R232–R237.

This sequence belongs to the IPP transferase family. As to quaternary structure, monomer. The cofactor is Mg(2+).

The catalysed reaction is adenosine(37) in tRNA + dimethylallyl diphosphate = N(6)-dimethylallyladenosine(37) in tRNA + diphosphate. Functionally, catalyzes the transfer of a dimethylallyl group onto the adenine at position 37 in tRNAs that read codons beginning with uridine, leading to the formation of N6-(dimethylallyl)adenosine (i(6)A). In Shewanella woodyi (strain ATCC 51908 / MS32), this protein is tRNA dimethylallyltransferase.